The primary structure comprises 259 residues: Flap endonuclease Xni (259 aa).

Position 109 (D109) interacts with Mg(2+). The 5'-3' exonuclease domain occupies 165 to 255; the sequence is VTPAQLTDYW…FNLQDIRFNS (91 aa). K(+) contacts are provided by L176, P185, V187, and I190. The interaction with DNA stretch occupies residues 189–194; that stretch reads GIGPKA.

It belongs to the Xni family. Requires Mg(2+) as cofactor. It depends on K(+) as a cofactor.

Its function is as follows. Has flap endonuclease activity. During DNA replication, flap endonucleases cleave the 5'-overhanging flap structure that is generated by displacement synthesis when DNA polymerase encounters the 5'-end of a downstream Okazaki fragment. The polypeptide is Flap endonuclease Xni (Vibrio cholerae serotype O1 (strain ATCC 39315 / El Tor Inaba N16961)).